Reading from the N-terminus, the 1398-residue chain is DNA topoisomerase 2 (1398 aa).

Residues asparagine 69, asparagine 103, 131–133 (SDN), and 144–151 (GRNGFGAK) each bind ATP. Positions 260-317 (NSNDNKNNKGQNDNNNNNNNNNDENANQNNDNLDVSLSNEPADGTPTKNNNNNNNNND) are disordered. Over residues 267–291 (NKGQNDNNNNNNNNNDENANQNNDN) the composition is skewed to low complexity. 411 to 413 (QTK) serves as a coordination point for ATP. Residues 493–608 (CTLILTEGDS…SLLKHKGFLS (116 aa)) enclose the Toprim domain. The Mg(2+) site is built by glutamate 499, aspartate 577, and aspartate 579. Positions 739 to 1191 (IPNIMDGWKP…TVETMWLKDI (453 aa)) constitute a Topo IIA-type catalytic domain. The O-(5'-phospho-DNA)-tyrosine intermediate role is filled by tyrosine 830. The interval 1012 to 1021 (KLKSTLTTTN) is interaction with DNA. Disordered stretches follow at residues 1214-1250 (KFKV…SDSS) and 1262-1361 (NTNK…NSSI). Positions 1262–1276 (NTNKKTTTSSNNVNN) are enriched in low complexity. Polar residues-rich tracts occupy residues 1287 to 1300 (LNSN…SVSK) and 1348 to 1357 (DSTNDNNSEL).

The protein belongs to the type II topoisomerase family. As to quaternary structure, homodimer. Mg(2+) is required as a cofactor. The cofactor is Mn(2+). Ca(2+) serves as cofactor.

The protein resides in the nucleus. It catalyses the reaction ATP-dependent breakage, passage and rejoining of double-stranded DNA.. Control of topological states of DNA by transient breakage and subsequent rejoining of DNA strands. Topoisomerase II makes double-strand breaks. The polypeptide is DNA topoisomerase 2 (TOP2) (Plasmodium falciparum (isolate K1 / Thailand)).